Here is a 72-residue protein sequence, read N- to C-terminus: uncharacterized protein (72 aa).

A coiled-coil region spans residues 27–55; it reads YTQNLINELQEARDSINDLQRAHERLKLV.

This is an uncharacterized protein from Schizosaccharomyces pombe (strain 972 / ATCC 24843) (Fission yeast).